The chain runs to 262 residues: tRNA pseudouridine synthase A (262 aa).

Residue Asp51 is the Nucleophile of the active site. Residue Tyr109 coordinates substrate.

This sequence belongs to the tRNA pseudouridine synthase TruA family. In terms of assembly, homodimer.

The catalysed reaction is uridine(38/39/40) in tRNA = pseudouridine(38/39/40) in tRNA. Its function is as follows. Formation of pseudouridine at positions 38, 39 and 40 in the anticodon stem and loop of transfer RNAs. This Dechloromonas aromatica (strain RCB) protein is tRNA pseudouridine synthase A.